Consider the following 503-residue polypeptide: Aminoaldehyde dehydrogenase 1, peroxisomal (503 aa).

Na(+)-binding residues include Ile28, Asp99, and Leu189. Gly238–Lys245 is an NAD(+) binding site. Glu260 functions as the Proton acceptor in the catalytic mechanism. NAD(+) is bound by residues Cys294 and Glu393. The Nucleophile role is filled by Cys294.

This sequence belongs to the aldehyde dehydrogenase family. In terms of tissue distribution, expressed in leaves, flowers and fruits.

The protein resides in the cytoplasm. It localises to the cytosol. The enzyme catalyses 4-aminobutanal + NAD(+) + H2O = 4-aminobutanoate + NADH + 2 H(+). It carries out the reaction 3-aminopropanal + NAD(+) + H2O = beta-alanine + NADH + 2 H(+). Its pathway is amine and polyamine biosynthesis; betaine biosynthesis via choline pathway; betaine from betaine aldehyde: step 1/1. In terms of biological role, dehydrogenase that catalyzes the oxidation of several aminoaldehydes. Metabolizes and detoxifies aldehyde products of polyamine degradation to non-toxic amino acids. Catalyzes the oxidation of 4-aminobutanal and 3-aminopropanal to 4-aminobutanoate and beta-alanine, respectively. This chain is Aminoaldehyde dehydrogenase 1, peroxisomal, found in Malus domestica (Apple).